The following is a 605-amino-acid chain: Elongation factor 4 (605 aa).

Residues 5 to 187 form the tr-type G domain; that stretch reads ALIRNFSIIA…AVVERIPPPK (183 aa). GTP contacts are provided by residues 17 to 22 and 134 to 137; these read DHGKST and NKID.

Belongs to the TRAFAC class translation factor GTPase superfamily. Classic translation factor GTPase family. LepA subfamily.

It localises to the cell inner membrane. It carries out the reaction GTP + H2O = GDP + phosphate + H(+). Functionally, required for accurate and efficient protein synthesis under certain stress conditions. May act as a fidelity factor of the translation reaction, by catalyzing a one-codon backward translocation of tRNAs on improperly translocated ribosomes. Back-translocation proceeds from a post-translocation (POST) complex to a pre-translocation (PRE) complex, thus giving elongation factor G a second chance to translocate the tRNAs correctly. Binds to ribosomes in a GTP-dependent manner. The polypeptide is Elongation factor 4 (Novosphingobium aromaticivorans (strain ATCC 700278 / DSM 12444 / CCUG 56034 / CIP 105152 / NBRC 16084 / F199)).